A 374-amino-acid polypeptide reads, in one-letter code: Probable trehalose-phosphate phosphatase 9 (374 aa).

The protein belongs to the trehalose phosphatase family. Requires a divalent metal cation as cofactor.

It carries out the reaction alpha,alpha-trehalose 6-phosphate + H2O = alpha,alpha-trehalose + phosphate. It functions in the pathway glycan biosynthesis; trehalose biosynthesis. In terms of biological role, removes the phosphate from trehalose 6-phosphate to produce free trehalose. Trehalose accumulation in plant may improve abiotic stress tolerance. The sequence is that of Probable trehalose-phosphate phosphatase 9 (TPP9) from Oryza sativa subsp. japonica (Rice).